Reading from the N-terminus, the 159-residue chain is 2-C-methyl-D-erythritol 2,4-cyclodiphosphate synthase (159 aa).

Positions 8 and 10 each coordinate a divalent metal cation. Residues 8 to 10 (DVH) and 34 to 35 (HS) each bind 4-CDP-2-C-methyl-D-erythritol 2-phosphate. H42 provides a ligand contact to a divalent metal cation. Residues 56 to 58 (DIG), 61 to 65 (FPDTD), 100 to 106 (AQAPKML), 132 to 135 (TTTE), F139, and R142 contribute to the 4-CDP-2-C-methyl-D-erythritol 2-phosphate site.

It belongs to the IspF family. In terms of assembly, homotrimer. The cofactor is a divalent metal cation.

It catalyses the reaction 4-CDP-2-C-methyl-D-erythritol 2-phosphate = 2-C-methyl-D-erythritol 2,4-cyclic diphosphate + CMP. It functions in the pathway isoprenoid biosynthesis; isopentenyl diphosphate biosynthesis via DXP pathway; isopentenyl diphosphate from 1-deoxy-D-xylulose 5-phosphate: step 4/6. Its function is as follows. Involved in the biosynthesis of isopentenyl diphosphate (IPP) and dimethylallyl diphosphate (DMAPP), two major building blocks of isoprenoid compounds. Catalyzes the conversion of 4-diphosphocytidyl-2-C-methyl-D-erythritol 2-phosphate (CDP-ME2P) to 2-C-methyl-D-erythritol 2,4-cyclodiphosphate (ME-CPP) with a corresponding release of cytidine 5-monophosphate (CMP). This Salmonella typhi protein is 2-C-methyl-D-erythritol 2,4-cyclodiphosphate synthase.